Here is a 197-residue protein sequence, read N- to C-terminus: Nucleoside triphosphate pyrophosphatase (197 aa).

Catalysis depends on aspartate 72, which acts as the Proton acceptor.

The protein belongs to the Maf family. A divalent metal cation is required as a cofactor.

It is found in the cytoplasm. It catalyses the reaction a ribonucleoside 5'-triphosphate + H2O = a ribonucleoside 5'-phosphate + diphosphate + H(+). The enzyme catalyses a 2'-deoxyribonucleoside 5'-triphosphate + H2O = a 2'-deoxyribonucleoside 5'-phosphate + diphosphate + H(+). Its function is as follows. Nucleoside triphosphate pyrophosphatase. May have a dual role in cell division arrest and in preventing the incorporation of modified nucleotides into cellular nucleic acids. In Corynebacterium glutamicum (strain ATCC 13032 / DSM 20300 / JCM 1318 / BCRC 11384 / CCUG 27702 / LMG 3730 / NBRC 12168 / NCIMB 10025 / NRRL B-2784 / 534), this protein is Nucleoside triphosphate pyrophosphatase.